Consider the following 154-residue polypeptide: Lipoprotein signal peptidase (154 aa).

The next 4 helical transmembrane spans lie at 8–28 (AFFLISVACFLADYYSKYWAL), 36–56 (IVVNTYMNFILAFNHGAAFSF), 66–86 (WLFAGFAGIVALWLIMTLLTK), and 88–108 (HHWLMSVSYACILGGAVGNLY). Catalysis depends on residues Asp118 and Asp136. A helical transmembrane segment spans residues 129–149 (WPVFNLADVAITLGVILMLIA).

Belongs to the peptidase A8 family.

It localises to the cell inner membrane. The catalysed reaction is Release of signal peptides from bacterial membrane prolipoproteins. Hydrolyzes -Xaa-Yaa-Zaa-|-(S,diacylglyceryl)Cys-, in which Xaa is hydrophobic (preferably Leu), and Yaa (Ala or Ser) and Zaa (Gly or Ala) have small, neutral side chains.. The protein operates within protein modification; lipoprotein biosynthesis (signal peptide cleavage). Functionally, this protein specifically catalyzes the removal of signal peptides from prolipoproteins. This is Lipoprotein signal peptidase from Dichelobacter nodosus (strain VCS1703A).